Reading from the N-terminus, the 144-residue chain is Large ribosomal subunit protein uL13 (144 aa).

This sequence belongs to the universal ribosomal protein uL13 family. As to quaternary structure, part of the 50S ribosomal subunit.

Functionally, this protein is one of the early assembly proteins of the 50S ribosomal subunit, although it is not seen to bind rRNA by itself. It is important during the early stages of 50S assembly. The protein is Large ribosomal subunit protein uL13 of Pelotomaculum thermopropionicum (strain DSM 13744 / JCM 10971 / SI).